A 309-amino-acid chain; its full sequence is MEILLANPRGFCAGVDRAISIVERALDIFEKPIYVRHEVVHNRYVVDGLKSRGAVFVEELDQIPDDSIVIFSAHGVSQAVRTEAKRRDLKIFDATCPLVTKVHMEVTRASRKGIECILIGHQGHPEVEGTMGQYGNDGGGIYLVETVEDVAKLNVKNADNLFYCSQTTLSVDDTADVIDALRAKFPAIDGPRKDDICYATQNRQDAVRDLADKVDVLLVVGAKNSSNSNRLRELADKMGTKAYLIDDATNVQESWFTGINAVGVTAGASAPEVLVQQVITRLKELGGNQVTENPGEEENIVFAVPIELR.

C12 is a binding site for [4Fe-4S] cluster. Positions 41 and 74 each coordinate (2E)-4-hydroxy-3-methylbut-2-enyl diphosphate. Residues H41 and H74 each contribute to the dimethylallyl diphosphate site. 2 residues coordinate isopentenyl diphosphate: H41 and H74. Residue C96 participates in [4Fe-4S] cluster binding. H124 is a (2E)-4-hydroxy-3-methylbut-2-enyl diphosphate binding site. Residue H124 participates in dimethylallyl diphosphate binding. H124 is an isopentenyl diphosphate binding site. E126 (proton donor) is an active-site residue. Residue T167 coordinates (2E)-4-hydroxy-3-methylbut-2-enyl diphosphate. C197 contacts [4Fe-4S] cluster. (2E)-4-hydroxy-3-methylbut-2-enyl diphosphate is bound by residues S225, S226, N227, and S269. Dimethylallyl diphosphate-binding residues include S225, S226, N227, and S269. Isopentenyl diphosphate-binding residues include S225, S226, N227, and S269.

Belongs to the IspH family. [4Fe-4S] cluster serves as cofactor.

It catalyses the reaction isopentenyl diphosphate + 2 oxidized [2Fe-2S]-[ferredoxin] + H2O = (2E)-4-hydroxy-3-methylbut-2-enyl diphosphate + 2 reduced [2Fe-2S]-[ferredoxin] + 2 H(+). The enzyme catalyses dimethylallyl diphosphate + 2 oxidized [2Fe-2S]-[ferredoxin] + H2O = (2E)-4-hydroxy-3-methylbut-2-enyl diphosphate + 2 reduced [2Fe-2S]-[ferredoxin] + 2 H(+). It participates in isoprenoid biosynthesis; dimethylallyl diphosphate biosynthesis; dimethylallyl diphosphate from (2E)-4-hydroxy-3-methylbutenyl diphosphate: step 1/1. Its pathway is isoprenoid biosynthesis; isopentenyl diphosphate biosynthesis via DXP pathway; isopentenyl diphosphate from 1-deoxy-D-xylulose 5-phosphate: step 6/6. In terms of biological role, catalyzes the conversion of 1-hydroxy-2-methyl-2-(E)-butenyl 4-diphosphate (HMBPP) into a mixture of isopentenyl diphosphate (IPP) and dimethylallyl diphosphate (DMAPP). Acts in the terminal step of the DOXP/MEP pathway for isoprenoid precursor biosynthesis. The protein is 4-hydroxy-3-methylbut-2-enyl diphosphate reductase of Pseudoalteromonas translucida (strain TAC 125).